The chain runs to 139 residues: Peptide methionine sulfoxide reductase MsrB (139 aa).

Residues 8-130 (DQEWRQQLTD…NSASLRFHSA (123 aa)) form the MsrB domain. Residues Cys47, Cys50, Cys96, and Cys99 each contribute to the Zn(2+) site. Cys119 (nucleophile) is an active-site residue.

The protein belongs to the MsrB Met sulfoxide reductase family. Zn(2+) is required as a cofactor.

It carries out the reaction L-methionyl-[protein] + [thioredoxin]-disulfide + H2O = L-methionyl-(R)-S-oxide-[protein] + [thioredoxin]-dithiol. The sequence is that of Peptide methionine sulfoxide reductase MsrB from Hahella chejuensis (strain KCTC 2396).